Here is a 142-residue protein sequence, read N- to C-terminus: Required for drug-induced death protein 1 (142 aa).

Disordered regions lie at residues 1–32 and 46–66; these read MTVGARLRSKAESSLLRRGPRGRGRTEGDEEA and EAAAESGTSAADERGPGTRGA. The helical transmembrane segment at 116–138 threads the bilayer; the sequence is VVIGLQGFAAAYSAPFAVATSVV.

It is found in the membrane. Its function is as follows. Regulates drug efflux through modulation of ABCB1 localization and activity. The protein is Required for drug-induced death protein 1 of Homo sapiens (Human).